A 605-amino-acid chain; its full sequence is Zinc metalloproteinase-disintegrin-like BfMP (605 aa).

The N-terminal stretch at 1–11 is a signal peptide; it reads MLVVFPYQGSS. A propeptide spanning residues 12–179 is cleaved from the precursor; sequence IILESGNVND…WESDEPFKNT (168 aa). N-linked (GlcNAc...) asparagine glycans are attached at residues Asn178 and Asn215. In terms of domain architecture, Peptidase M12B spans 196–392; sequence KYIEFYVAVD…DRPQCILNKP (197 aa). 17 disulfides stabilise this stretch: Cys307-Cys387, Cys347-Cys371, Cys350-Cys355, Cys403-Cys432, Cys414-Cys427, Cys416-Cys422, Cys426-Cys449, Cys440-Cys446, Cys445-Cys471, Cys458-Cys478, Cys465-Cys497, Cys490-Cys502, Cys509-Cys559, Cys524-Cys567, Cys537-Cys547, Cys554-Cys593, and Cys587-Cys598. Residue His332 coordinates Zn(2+). The active site involves Glu333. 2 residues coordinate Zn(2+): His336 and His342. The region spanning 400–486 is the Disintegrin domain; sequence PAICGNYFVE…ECPTDIFRRN (87 aa). The D/ECD-tripeptide signature appears at 464–466; that stretch reads DCD.

The protein belongs to the venom metalloproteinase (M12B) family. P-III subfamily. P-IIIa sub-subfamily. As to quaternary structure, monomer. Zn(2+) is required as a cofactor. In terms of tissue distribution, expressed by the venom gland.

It is found in the secreted. Functionally, snake venom zinc metalloproteinase that inhibits platelet aggregation and degrades fibrinogen. This is Zinc metalloproteinase-disintegrin-like BfMP from Bungarus fasciatus (Banded krait).